Here is a 413-residue protein sequence, read N- to C-terminus: ATP-dependent RNA helicase RhlB (413 aa).

The short motif at 9–37 is the Q motif element; the sequence is QRFADLPLHPQILAALNDQNFEYCTPIQA. One can recognise a Helicase ATP-binding domain in the interval 40-217; the sequence is LPLTLQGKDV…FEDMNDPEYI (178 aa). 53–60 contributes to the ATP binding site; it reads AQTGTGKT. A DEAD box motif is present at residues 163–166; sequence DEAD. Positions 241-388 constitute a Helicase C-terminal domain; it reads KMALLMTLLE…VSQYDPDSLI (148 aa).

The protein belongs to the DEAD box helicase family. RhlB subfamily. Component of the RNA degradosome, which is a multiprotein complex involved in RNA processing and mRNA degradation.

It localises to the cytoplasm. The catalysed reaction is ATP + H2O = ADP + phosphate + H(+). In terms of biological role, DEAD-box RNA helicase involved in RNA degradation. Has RNA-dependent ATPase activity and unwinds double-stranded RNA. This Actinobacillus succinogenes (strain ATCC 55618 / DSM 22257 / CCUG 43843 / 130Z) protein is ATP-dependent RNA helicase RhlB.